The primary structure comprises 426 residues: Glutamate-1-semialdehyde 2,1-aminomutase (426 aa).

N6-(pyridoxal phosphate)lysine is present on K265.

This sequence belongs to the class-III pyridoxal-phosphate-dependent aminotransferase family. HemL subfamily. Homodimer. It depends on pyridoxal 5'-phosphate as a cofactor.

The protein localises to the cytoplasm. The catalysed reaction is (S)-4-amino-5-oxopentanoate = 5-aminolevulinate. It functions in the pathway porphyrin-containing compound metabolism; protoporphyrin-IX biosynthesis; 5-aminolevulinate from L-glutamyl-tRNA(Glu): step 2/2. The protein is Glutamate-1-semialdehyde 2,1-aminomutase (hemL) of Salmonella typhimurium (strain SL1344).